A 295-amino-acid chain; its full sequence is Phosphoribosylaminoimidazole-succinocarboxamide synthase (295 aa).

This sequence belongs to the SAICAR synthetase family.

It carries out the reaction 5-amino-1-(5-phospho-D-ribosyl)imidazole-4-carboxylate + L-aspartate + ATP = (2S)-2-[5-amino-1-(5-phospho-beta-D-ribosyl)imidazole-4-carboxamido]succinate + ADP + phosphate + 2 H(+). Its pathway is purine metabolism; IMP biosynthesis via de novo pathway; 5-amino-1-(5-phospho-D-ribosyl)imidazole-4-carboxamide from 5-amino-1-(5-phospho-D-ribosyl)imidazole-4-carboxylate: step 1/2. The polypeptide is Phosphoribosylaminoimidazole-succinocarboxamide synthase (Corynebacterium ammoniagenes (Brevibacterium ammoniagenes)).